Reading from the N-terminus, the 644-residue chain is Protein ecdysoneless homolog (644 aa).

4 disordered regions span residues Ala-430 to Asp-449, Leu-496 to Gly-537, Gln-567 to Ser-589, and Gln-623 to Asn-644. The span at Val-431–Asn-447 shows a compositional bias: basic and acidic residues. Positions Val-439–Asn-644 are transcription activation. Residues Ile-481–Gly-497 are involved in nuclear export. The segment at Glu-502–Glu-532 is acidic region required for transactivation activity. Phosphoserine occurs at positions 503, 505, and 518. Positions Ser-503–Asp-523 are enriched in acidic residues. Over residues Phe-524–Ser-534 the composition is skewed to basic and acidic residues. A compositionally biased stretch (polar residues) spans Gln-567–Asn-577.

The protein belongs to the ECD family. As to quaternary structure, interacts with TP53, MDM2, TXNIP. Interacts (phosphorylated) with PIH1D1. Interacts with RUVBL1 mediating the PIH1D1-independent association with the R2TP complex. Interacts with RB1, RBL1 and RBL2; ECD competes with E2F1 for binding to hypophospshorylated RB1. Interacts with EP300. Interacts with DDX39A. Phosphorylated predominantly by CK2 on two serine-containing clusters; involved in cell cycle regulation activity. As to expression, highly expressed in muscle and heart. Over-expressed in pancreatic and breast cancers.

The protein resides in the cytoplasm. The protein localises to the nucleus. Regulator of p53/TP53 stability and function. Inhibits MDM2-mediated degradation of p53/TP53 possibly by cooperating in part with TXNIP. May be involved transcriptional regulation. In vitro has intrinsic transactivation activity enhanced by EP300. May be a transcriptional activator required for the expression of glycolytic genes. Involved in regulation of cell cycle progression. Proposed to disrupt Rb-E2F binding leading to transcriptional activation of E2F proteins. The cell cycle -regulating function may depend on its RUVBL1-mediated association with the R2TP complex. May play a role in regulation of pre-mRNA splicing. Participates together with DDX39A in mRNA nuclear export. This chain is Protein ecdysoneless homolog (ECD), found in Homo sapiens (Human).